The sequence spans 85 residues: MKKGIHPENYRPVVFKDMSNEDIFITRSTMEAKETIEIDGVTYPLIKVEISNTSHPFFTGKAKLVDTAGRVDKFMSRYGDRNKKK.

This sequence belongs to the bacterial ribosomal protein bL31 family. Type B subfamily. Part of the 50S ribosomal subunit.

The polypeptide is Large ribosomal subunit protein bL31B (Porphyromonas gingivalis (strain ATCC 33277 / DSM 20709 / CIP 103683 / JCM 12257 / NCTC 11834 / 2561)).